The primary structure comprises 215 residues: Meiotic chromosome segregation protein P8B7.28c (215 aa).

The interval 159-202 (TINSEYADDVSDNTDEERTESKGQQESNSAEEYDDDDSDEDRME) is disordered. Composition is skewed to acidic residues over residues 164-176 (YADD…DEER) and 187-201 (SAEE…EDRM).

It is found in the nucleus. It localises to the nucleolus. Its function is as follows. Required for meiotic chromosome segregation. The polypeptide is Meiotic chromosome segregation protein P8B7.28c (Schizosaccharomyces pombe (strain 972 / ATCC 24843) (Fission yeast)).